A 590-amino-acid chain; its full sequence is Putative DEAD-box ATP-dependent RNA helicase 51 (590 aa).

Positions Met-1 to Gly-81 are disordered. Residues Ala-40–Thr-51 show a composition bias toward polar residues. The span at Asn-59–Lys-78 shows a compositional bias: basic and acidic residues. The short motif at Lys-86–Ala-114 is the Q motif element. The Helicase ATP-binding domain maps to Ile-117–Arg-293. Residue Ala-130–Thr-137 coordinates ATP. A DEAD box motif is present at residues Asp-240 to Asp-243. The region spanning Val-329–Leu-481 is the Helicase C-terminal domain. The disordered stretch occupies residues Leu-549–Phe-590. A compositionally biased stretch (basic residues) spans Ser-554 to Gly-569. The span at Lys-579–Phe-590 shows a compositional bias: basic and acidic residues.

The protein belongs to the DEAD box helicase family. DDX18/HAS1 subfamily.

The enzyme catalyses ATP + H2O = ADP + phosphate + H(+). The chain is Putative DEAD-box ATP-dependent RNA helicase 51 from Oryza sativa subsp. japonica (Rice).